Consider the following 323-residue polypeptide: o-succinylbenzoate synthase (323 aa).

The active-site Proton donor is Lys134. Residues Asp162, Glu191, and Asp214 each contribute to the Mg(2+) site. The active-site Proton acceptor is the Lys236.

It belongs to the mandelate racemase/muconate lactonizing enzyme family. MenC type 1 subfamily. A divalent metal cation is required as a cofactor.

The catalysed reaction is (1R,6R)-6-hydroxy-2-succinyl-cyclohexa-2,4-diene-1-carboxylate = 2-succinylbenzoate + H2O. The protein operates within quinol/quinone metabolism; 1,4-dihydroxy-2-naphthoate biosynthesis; 1,4-dihydroxy-2-naphthoate from chorismate: step 4/7. It participates in quinol/quinone metabolism; menaquinone biosynthesis. Functionally, converts 2-succinyl-6-hydroxy-2,4-cyclohexadiene-1-carboxylate (SHCHC) to 2-succinylbenzoate (OSB). In Yersinia pseudotuberculosis serotype O:3 (strain YPIII), this protein is o-succinylbenzoate synthase.